A 78-amino-acid chain; its full sequence is Mitochondrial import inner membrane translocase subunit Tim9 (78 aa).

The short motif at 24 to 48 (CFTSCVNEFGSRTVNAKEESCANNC) is the Twin CX3C motif element. 2 cysteine pairs are disulfide-bonded: Cys24-Cys48 and Cys28-Cys44.

This sequence belongs to the small Tim family. As to quaternary structure, heterohexamer; composed of 3 copies of tim-9/tin-9.1 and 3 copies of tim-10/tin-10, named soluble 70 kDa complex. The complex associates with the tim-22 component of the TIM22 complex. Interacts with multi-pass transmembrane proteins in transit.

The protein resides in the mitochondrion inner membrane. Mitochondrial intermembrane chaperone that participates in the import and insertion of multi-pass transmembrane proteins into the mitochondrial inner membrane. May also be required for the transfer of beta-barrel precursors from the TOM complex to the sorting and assembly machinery (SAM complex) of the outer membrane. Acts as a chaperone-like protein that protects the hydrophobic precursors from aggregation and guide them through the mitochondrial intermembrane space. This Caenorhabditis briggsae protein is Mitochondrial import inner membrane translocase subunit Tim9 (tin-9.1).